A 195-amino-acid chain; its full sequence is Small ribosomal subunit protein uS7 (195 aa).

Belongs to the universal ribosomal protein uS7 family. In terms of assembly, part of the 30S ribosomal subunit.

One of the primary rRNA binding proteins, it binds directly to 16S rRNA where it nucleates assembly of the head domain of the 30S subunit. Is located at the subunit interface close to the decoding center. This is Small ribosomal subunit protein uS7 from Sulfolobus acidocaldarius (strain ATCC 33909 / DSM 639 / JCM 8929 / NBRC 15157 / NCIMB 11770).